The primary structure comprises 157 residues: MFDVLMYLFETYIHNEAEMRVDQDRLTRDLTDAGFEREDIYNALLWLEKLADYQEGLVEPMQLASDPLSVRIYTAEECERLDASCRGFVLFLEQIQVLNLETREMVIERVMALDTAEFELEDLKWVILMVLFNIPGCENAYQQMEELLFEVNEGMLH.

It belongs to the Smg family.

In Enterobacter sp. (strain 638), this protein is Protein Smg.